An 834-amino-acid chain; its full sequence is Enhancer of filamentation 1 (834 aa).

The segment at 1 to 505 is required for interaction with ITCH; that stretch reads MKYKNLMARA…HQILSQTSHD (505 aa). The SH3 domain occupies 3–65; that stretch reads YKNLMARALY…PGNRVKLLIG (63 aa). Y92, Y164, Y166, Y177, Y189, Y214, and Y223 each carry phosphotyrosine; by ABL1. The interacts strongly with spindle-regulatory protein D1M1 stretch occupies residues 102-229; sequence RDTIYQVPPS…KGVYAIPPSA (128 aa). Positions 238-260 are disordered; sequence EKDYDFPPPMRQAGRPDLRPEGV. Y279 carries the post-translational modification Phosphotyrosine; by ABL1. A disordered region spans residues 291 to 316; sequence ARRHQSLSPNHPPPQLGQSVGSQNDA. The residue at position 296 (S296) is a Phosphoserine. A compositionally biased stretch (polar residues) spans 306-315; the sequence is LGQSVGSQND. Y317 is modified (phosphotyrosine; by ABL1). 2 disordered regions span residues 328–398 and 560–623; these read PPAE…SPAQ and GPGS…GSER. The segment covering 332-344 has biased composition (basic and acidic residues); that stretch reads TSEKANPQERDGV. Residues 351–834 form an interacts with CTTN region; sequence NPPDAKGSRD…KRSLLEMATF (484 aa). Residues 360 to 363 carry the Caspase cleavage related site motif; sequence DLVD. S369 carries the post-translational modification Phosphoserine. Low complexity predominate over residues 369 to 395; sequence SFSSTGSTRSNMSTSSTSSKESSLSAS. A divergent helix-loop-helix motif region spans residues 710-760; that stretch reads FYYDQCETHFISLLNAIDALFSCVSSAQPPRIFVAHSKFVILSAHKLVFIG. The tract at residues 710–834 is required for interaction with PLK1; the sequence is FYYDQCETHF…KRSLLEMATF (125 aa). At S780 the chain carries Phosphoserine; by CSNK1D and CSNK1E. The residue at position 804 (T804) is a Phosphothreonine; by CSNK1E.

The protein belongs to the CAS family. Homodimer. Forms heterodimers with BCAR1/p130cas. Forms complexes with PTK2B/RAFTK, adapter protein CRKL and LYN kinase. Part of a complex composed of NEDD9, AURKA and CTTN; within the complex NEDD9 acts as a scaffold protein and is required for complex formation. Part of a ternary complex composed of SMAD3, ITCH/AIP4 and NEDD9/HEF1; within the complex NEDD9/HEF1 interacts (via N-terminus) with ITCH/AIP4 (via WW domains); the complex mediates ubiquitination and proteasomal degradation of NEDD9/HEF1. Interacts with SMAD3; the interaction promotes NEDD9 ubiquitination and proteasomal degradation. Interacts with ID2. Interacts with CTTN (via N-terminus). Interacts with MICAL. Interacts with TXNL4/DIM1. Interacts with BCAR3 (via Ras-GEF domain). Interacts with SH2D3C isoform 1 and isoform 2. Interacts with ECT2. Interacts with PTPN11/SHP-2 (via SH2 domains); the interaction is enhanced when NEDD9/CAS-L is tyrosine phosphorylated. Interacts (via C-terminus) with PLK1 (via polo box domains). Interacts with NKX2-5. Interacts with SMAD3; the interaction is inhibited by oxidation of NEDD9. Interacts with NEDD9/HEF1; interaction is induced by CXCL12 promotion of ABL-mediated phosphorylation of NEDD9/HEF1. Interacts (via SH3 domain) with PTK2/FAK. Interacts with FYN; in the presence of PTK2. Interacts with INPPL1/SHIP2. Cell cycle-regulated processing produces four isoforms: p115, p105, p65, and p55. Isoform p115 arises from p105 phosphorylation and appears later in the cell cycle. Isoform p55 arises from p105 as a result of cleavage at a caspase cleavage-related site and it appears specifically at mitosis. The p65 isoform is poorly detected. In terms of processing, polyubiquitinated by ITCH/AIP4, leading to proteasomal degradation. Post-translationally, PTK2/FAK1 phosphorylates the protein at the YDYVHL motif (conserved among all cas proteins) following integrin stimulation. The SRC family kinases (FYN, SRC, LCK and CRK) are recruited to the phosphorylated sites and can phosphorylate other tyrosine residues. Ligation of either integrin beta-1 or B-cell antigen receptor on tonsillar B-cells and B-cell lines promotes tyrosine phosphorylation and both integrin and BCR-mediated tyrosine phosphorylation requires an intact actin network. Phosphorylation is required to recruit NEDD9 to T-cell receptor microclusters at the periphery of newly formed immunological synapses. In fibroblasts transformation with oncogene v-ABL results in an increase in tyrosine phosphorylation. Transiently phosphorylated following CD3 cross-linking and this phosphorylated form binds to CRKL and C3G. A mutant lacking the SH3 domain is phosphorylated upon CD3 cross-linking but not upon integrin beta-1 cross-linking. Tyrosine phosphorylation occurs upon stimulation of the G-protein coupled C1a calcitonin receptor. Calcitonin-stimulated tyrosine phosphorylation is mediated by calcium- and protein kinase C-dependent mechanisms and requires the integrity of the actin cytoskeleton. Phosphorylation at Ser-369 induces proteasomal degradation. Phosphorylated by LYN. Phosphorylation at Ser-780 by CSNK1D or CSNK1E, or phosphorylation of Thr-804 by CSNK1E enhances the interaction of NEDD9 with PLK1. Expressed in B-cells (at protein level). Expressed in the respiratory epithelium of the main bronchi to the bronchioles in the lungs (at protein level). High levels detected in kidney, lung, and placenta. Expressed in lymphocytes.

Its subcellular location is the cytoplasm. The protein resides in the cell cortex. It localises to the nucleus. The protein localises to the golgi apparatus. It is found in the cell projection. Its subcellular location is the lamellipodium. The protein resides in the cell junction. It localises to the focal adhesion. The protein localises to the cytoskeleton. It is found in the spindle pole. Its subcellular location is the cilium. The protein resides in the cilium basal body. It localises to the basolateral cell membrane. The protein localises to the spindle. Scaffolding protein which plays a central coordinating role for tyrosine-kinase-based signaling related to cell adhesion. As a focal adhesion protein, plays a role in embryonic fibroblast migration. May play an important role in integrin beta-1 or B cell antigen receptor (BCR) mediated signaling in B- and T-cells. Integrin beta-1 stimulation leads to recruitment of various proteins including CRKL and SHPTP2 to the tyrosine phosphorylated form. Promotes adhesion and migration of lymphocytes; as a result required for the correct migration of lymphocytes to the spleen and other secondary lymphoid organs. Plays a role in the organization of T-cell F-actin cortical cytoskeleton and the centralization of T-cell receptor microclusters at the immunological synapse. Negatively regulates cilia outgrowth in polarized cysts. Modulates cilia disassembly via activation of AURKA-mediated phosphorylation of HDAC6 and subsequent deacetylation of alpha-tubulin. Positively regulates RANKL-induced osteoclastogenesis. Required for the maintenance of hippocampal dendritic spines in the dentate gyrus and CA1 regions, thereby involved in spatial learning and memory. This is Enhancer of filamentation 1 from Homo sapiens (Human).